Reading from the N-terminus, the 155-residue chain is MTAGTVVITGGILATVILLCIIAVLCYCRLQYYCCKKEDSEEDEEEPDFAVHSRFPPMHSNRNIVLANGPSIYSSPYNKKHQHCRSVCTHHEPPAFLLHPPEEIRNGGERIAYKTISQEEIELPVNVSNLQVLNPNRLSAMREAFSRSRSISTDV.

A helical transmembrane segment spans residues 6–26; sequence VVITGGILATVILLCIIAVLC.

This sequence belongs to the FAM163 family.

It is found in the membrane. The polypeptide is Protein FAM163B (fam163b) (Xenopus tropicalis (Western clawed frog)).